The following is a 61-amino-acid chain: Small ribosomal subunit protein uS14B (61 aa).

Zn(2+)-binding residues include Cys24, Cys27, Cys40, and Cys43.

This sequence belongs to the universal ribosomal protein uS14 family. Zinc-binding uS14 subfamily. In terms of assembly, part of the 30S ribosomal subunit. Contacts proteins S3 and S10. It depends on Zn(2+) as a cofactor.

Functionally, binds 16S rRNA, required for the assembly of 30S particles and may also be responsible for determining the conformation of the 16S rRNA at the A site. In Levilactobacillus brevis (strain ATCC 367 / BCRC 12310 / CIP 105137 / JCM 1170 / LMG 11437 / NCIMB 947 / NCTC 947) (Lactobacillus brevis), this protein is Small ribosomal subunit protein uS14B.